The following is a 189-amino-acid chain: Elongation factor P (189 aa).

Position 34 is an N6-(3,6-diaminohexanoyl)-5-hydroxylysine (Lys34).

Belongs to the elongation factor P family. Post-translationally, may be beta-lysylated on the epsilon-amino group of Lys-34 by the combined action of EpmA and EpmB, and then hydroxylated on the C5 position of the same residue by EpmC (if this protein is present). Lysylation is critical for the stimulatory effect of EF-P on peptide-bond formation. The lysylation moiety may extend toward the peptidyltransferase center and stabilize the terminal 3-CCA end of the tRNA. Hydroxylation of the C5 position on Lys-34 may allow additional potential stabilizing hydrogen-bond interactions with the P-tRNA.

The protein resides in the cytoplasm. The protein operates within protein biosynthesis; polypeptide chain elongation. Its function is as follows. Involved in peptide bond synthesis. Alleviates ribosome stalling that occurs when 3 or more consecutive Pro residues or the sequence PPG is present in a protein, possibly by augmenting the peptidyl transferase activity of the ribosome. Modification of Lys-34 is required for alleviation. This Francisella tularensis subsp. novicida (strain U112) protein is Elongation factor P.